Reading from the N-terminus, the 330-residue chain is 4-hydroxythreonine-4-phosphate dehydrogenase (330 aa).

Residues H134 and T135 each contribute to the substrate site. A divalent metal cation contacts are provided by H163, H208, and H263. Positions 271, 280, and 289 each coordinate substrate.

The protein belongs to the PdxA family. Homodimer. Requires Zn(2+) as cofactor. Mg(2+) is required as a cofactor. Co(2+) serves as cofactor.

The protein resides in the cytoplasm. The catalysed reaction is 4-(phosphooxy)-L-threonine + NAD(+) = 3-amino-2-oxopropyl phosphate + CO2 + NADH. It participates in cofactor biosynthesis; pyridoxine 5'-phosphate biosynthesis; pyridoxine 5'-phosphate from D-erythrose 4-phosphate: step 4/5. Catalyzes the NAD(P)-dependent oxidation of 4-(phosphooxy)-L-threonine (HTP) into 2-amino-3-oxo-4-(phosphooxy)butyric acid which spontaneously decarboxylates to form 3-amino-2-oxopropyl phosphate (AHAP). This chain is 4-hydroxythreonine-4-phosphate dehydrogenase, found in Methylococcus capsulatus (strain ATCC 33009 / NCIMB 11132 / Bath).